We begin with the raw amino-acid sequence, 366 residues long: Peptide chain release factor 2 (366 aa).

Residue Gln251 is modified to N5-methylglutamine.

The protein belongs to the prokaryotic/mitochondrial release factor family. In terms of processing, methylated by PrmC. Methylation increases the termination efficiency of RF2.

The protein resides in the cytoplasm. Peptide chain release factor 2 directs the termination of translation in response to the peptide chain termination codons UGA and UAA. This is Peptide chain release factor 2 from Campylobacter lari (strain RM2100 / D67 / ATCC BAA-1060).